We begin with the raw amino-acid sequence, 349 residues long: Ribosomal RNA large subunit methyltransferase M (349 aa).

S-adenosyl-L-methionine contacts are provided by residues Ser-183, 216–219 (APGG), Asp-235, Asp-255, and Asp-271. The active-site Proton acceptor is Lys-300.

This sequence belongs to the class I-like SAM-binding methyltransferase superfamily. RNA methyltransferase RlmE family. RlmM subfamily. In terms of assembly, monomer.

The protein resides in the cytoplasm. It carries out the reaction cytidine(2498) in 23S rRNA + S-adenosyl-L-methionine = 2'-O-methylcytidine(2498) in 23S rRNA + S-adenosyl-L-homocysteine + H(+). Its function is as follows. Catalyzes the 2'-O-methylation at nucleotide C2498 in 23S rRNA. The chain is Ribosomal RNA large subunit methyltransferase M from Stutzerimonas stutzeri (strain A1501) (Pseudomonas stutzeri).